The following is a 42-amino-acid chain: Capsid protein G8P (42 aa).

Topologically, residues 1 to 12 are periplasmic; it reads MGDILTGVSGAE. The chain crosses the membrane as a helical span at residues 13-34; the sequence is AATAMIAAAAIIALVGFTKWGA. Over 35–42 the chain is Cytoplasmic; that stretch reads KKVASFFG.

The protein belongs to the inovirus capsid protein family. Homomultimerizes. There are several thousands of this protein in the phage capsid.

The protein localises to the virion. It localises to the host membrane. In terms of biological role, self assembles to form a helical capsid wrapping up the viral genomic DNA. The capsid displays a filamentous structure with a length of 760-1950 nm and a width of 6-8 nm. The virion assembly and budding take place at the host inner membrane. The sequence is that of Capsid protein G8P (VIII) from Xanthomonas phage phiLf (Bacteriophage phi-Lf).